The chain runs to 101 residues: Small ribosomal subunit protein uS14 (101 aa).

The protein belongs to the universal ribosomal protein uS14 family. Part of the 30S ribosomal subunit. Contacts proteins S3 and S10.

Binds 16S rRNA, required for the assembly of 30S particles and may also be responsible for determining the conformation of the 16S rRNA at the A site. The protein is Small ribosomal subunit protein uS14 of Paracoccus denitrificans (strain Pd 1222).